Reading from the N-terminus, the 419-residue chain is uncharacterized protein (419 aa).

7 consecutive transmembrane segments (helical) span residues Ile16–Thr36, Leu186–Ala206, Leu235–Leu255, Val283–Phe303, Ile318–Ala338, Asp340–Leu360, and Phe369–Ile389.

This sequence to M.jannaschii MJ1024.

The protein resides in the cell membrane. This is an uncharacterized protein from Bacillus subtilis (strain 168).